We begin with the raw amino-acid sequence, 502 residues long: Thermosome subunit beta (502 aa).

It belongs to the TCP-1 chaperonin family. In terms of assembly, forms a Heterooligomeric complex of two stacked eight-membered rings.

Its function is as follows. Molecular chaperone; binds unfolded polypeptides in vitro, and has a weak ATPase activity. The sequence is that of Thermosome subunit beta (thsB) from Desulfurococcus mucosus (Desulfurococcus mobilis).